Reading from the N-terminus, the 53-residue chain is Small, acid-soluble spore protein O (53 aa).

A disordered region spans residues 1–53; the sequence is MVRKKANHSRPGMNAAKAQGKDAGLTSQFHAEIGQEPLNQAQRQNNKKRKKNQ.

It belongs to the SspO family.

It localises to the spore core. This chain is Small, acid-soluble spore protein O, found in Halalkalibacterium halodurans (strain ATCC BAA-125 / DSM 18197 / FERM 7344 / JCM 9153 / C-125) (Bacillus halodurans).